Consider the following 101-residue polypeptide: Phosphoribosyl-AMP cyclohydrolase (101 aa).

Asp71 provides a ligand contact to Mg(2+). Zn(2+) is bound at residue Cys72. Mg(2+) is bound by residues Asp73 and Asp75. Residues Cys88 and Cys95 each contribute to the Zn(2+) site.

The protein belongs to the PRA-CH family. Homodimer. Requires Mg(2+) as cofactor. Zn(2+) is required as a cofactor.

It is found in the cytoplasm. It carries out the reaction 1-(5-phospho-beta-D-ribosyl)-5'-AMP + H2O = 1-(5-phospho-beta-D-ribosyl)-5-[(5-phospho-beta-D-ribosylamino)methylideneamino]imidazole-4-carboxamide. Its pathway is amino-acid biosynthesis; L-histidine biosynthesis; L-histidine from 5-phospho-alpha-D-ribose 1-diphosphate: step 3/9. Catalyzes the hydrolysis of the adenine ring of phosphoribosyl-AMP. The chain is Phosphoribosyl-AMP cyclohydrolase from Bacillus cytotoxicus (strain DSM 22905 / CIP 110041 / 391-98 / NVH 391-98).